A 761-amino-acid polypeptide reads, in one-letter code: uncharacterized protein (761 aa).

Residues 1–84 (MIVKCPICDG…CGGSGKVVKC (84 aa)) form a CR-type zinc finger. The S1 motif domain maps to 135-200 (GKFYKGVVTR…EKREIDFKYI (66 aa)).

This is an uncharacterized protein from Methanocaldococcus jannaschii (strain ATCC 43067 / DSM 2661 / JAL-1 / JCM 10045 / NBRC 100440) (Methanococcus jannaschii).